The following is a 290-amino-acid chain: Protein EURL homolog (290 aa).

Positions 185-206 (SHSQAQKTEETSSGPEGTIQTQ) are disordered. Residues 228–251 (AKLQQRIQEVFEELTHQVQEKDSL) are a coiled coil.

The protein belongs to the EURL family. Interacts with CCDC85B. As to expression, expressed in brain (at protein level). Expressed in neural progenitor cells and postmitotic neurons of the embryonic cerebral cortex.

Plays a role in cortical progenitor cell proliferation and differentiation. Promotes dendritic spine development of post-migratory cortical projection neurons by modulating the beta-catenin signaling pathway. The chain is Protein EURL homolog from Mus musculus (Mouse).